The chain runs to 149 residues: Calmodulin (149 aa).

4 EF-hand domains span residues 8–43 (QQIA…LGQN), 44–79 (PSES…KMKD), 81–116 (DSEA…IGEK), and 117–149 (LSDA…LAAK). Positions 21, 23, 25, 27, 32, 57, 59, 61, 63, 68, 94, 96, 98, 100, 105, 130, 132, 134, 136, and 141 each coordinate Ca(2+).

It belongs to the calmodulin family.

Its function is as follows. Calmodulin mediates the control of a large number of enzymes, ion channels and other proteins by Ca(2+). Among the enzymes to be stimulated by the calmodulin-Ca(2+) complex are a number of protein kinases and phosphatases. This is Calmodulin (CMD1) from Candida albicans (Yeast).